A 489-amino-acid chain; its full sequence is Probable transporter MCH1 (489 aa).

The next 3 membrane-spanning stretches (helical) occupy residues 30–50, 68–88, and 92–112; these read IAYI…LISL, MIVT…GIIA, and GPIT…AYLA. N-linked (GlcNAc...) asparagine glycosylation is present at Asn-123. A run of 8 helical transmembrane segments spans residues 132 to 152, 163 to 183, 202 to 222, 279 to 299, 307 to 327, 351 to 371, 388 to 408, and 421 to 441; these read TLVC…SALI, LLSI…GSQF, VFKA…IATS, VLYI…MFIA, VLAG…YALT, WILL…YMLS, FYIG…YPTI, and AYGT…LIYA. Residue Asn-450 is glycosylated (N-linked (GlcNAc...) asparagine). A helical transmembrane segment spans residues 462-482; the sequence is ETTALEFCAAILLTVVVTVLW.

This sequence belongs to the major facilitator superfamily.

Its subcellular location is the vacuole membrane. In terms of biological role, probable transporter. This chain is Probable transporter MCH1 (MCH1), found in Candida glabrata (strain ATCC 2001 / BCRC 20586 / JCM 3761 / NBRC 0622 / NRRL Y-65 / CBS 138) (Yeast).